A 474-amino-acid polypeptide reads, in one-letter code: tRNA-2-methylthio-N(6)-dimethylallyladenosine synthase (474 aa).

An MTTase N-terminal domain is found at 3–120; that stretch reads KKLHIKTWGC…LPEMINHVQG (118 aa). [4Fe-4S] cluster contacts are provided by cysteine 12, cysteine 49, cysteine 83, cysteine 157, cysteine 161, and cysteine 164. Positions 143 to 375 constitute a Radical SAM core domain; sequence RAEGPTAFVS…QQRISQQAME (233 aa). Positions 378–441 constitute a TRAM domain; sequence RKMVGTVQRV…ASSLRGILLR (64 aa).

This sequence belongs to the methylthiotransferase family. MiaB subfamily. As to quaternary structure, monomer. [4Fe-4S] cluster serves as cofactor.

Its subcellular location is the cytoplasm. The enzyme catalyses N(6)-dimethylallyladenosine(37) in tRNA + (sulfur carrier)-SH + AH2 + 2 S-adenosyl-L-methionine = 2-methylsulfanyl-N(6)-dimethylallyladenosine(37) in tRNA + (sulfur carrier)-H + 5'-deoxyadenosine + L-methionine + A + S-adenosyl-L-homocysteine + 2 H(+). In terms of biological role, catalyzes the methylthiolation of N6-(dimethylallyl)adenosine (i(6)A), leading to the formation of 2-methylthio-N6-(dimethylallyl)adenosine (ms(2)i(6)A) at position 37 in tRNAs that read codons beginning with uridine. The protein is tRNA-2-methylthio-N(6)-dimethylallyladenosine synthase of Yersinia pestis bv. Antiqua (strain Angola).